Reading from the N-terminus, the 325-residue chain is tRNA dimethylallyltransferase (325 aa).

Position 25–32 (G25–S32) interacts with ATP. Residue T27–S32 coordinates substrate. Residues D50–Q53 are interaction with substrate tRNA.

It belongs to the IPP transferase family. Monomer. It depends on Mg(2+) as a cofactor.

It carries out the reaction adenosine(37) in tRNA + dimethylallyl diphosphate = N(6)-dimethylallyladenosine(37) in tRNA + diphosphate. Its function is as follows. Catalyzes the transfer of a dimethylallyl group onto the adenine at position 37 in tRNAs that read codons beginning with uridine, leading to the formation of N6-(dimethylallyl)adenosine (i(6)A). The sequence is that of tRNA dimethylallyltransferase from Dehalococcoides mccartyi (strain ATCC BAA-2266 / KCTC 15142 / 195) (Dehalococcoides ethenogenes (strain 195)).